The following is a 144-amino-acid chain: Peptide methionine sulfoxide reductase MsrB (144 aa).

Residues 5 to 128 (KEELRQRIGE…NSAALQFIPV (124 aa)) form the MsrB domain. Catalysis depends on Cys-117, which acts as the Nucleophile.

The protein belongs to the MsrB Met sulfoxide reductase family.

The catalysed reaction is L-methionyl-[protein] + [thioredoxin]-disulfide + H2O = L-methionyl-(R)-S-oxide-[protein] + [thioredoxin]-dithiol. This Ligilactobacillus salivarius (strain UCC118) (Lactobacillus salivarius) protein is Peptide methionine sulfoxide reductase MsrB.